Here is a 224-residue protein sequence, read N- to C-terminus: EEF1A lysine methyltransferase 3 (224 aa).

S-adenosyl-L-methionine-binding positions include Trp-58, 84–86 (GAG), Asp-105, Trp-134, and Ala-151.

It belongs to the methyltransferase superfamily. METTL21 family.

The protein resides in the cytoplasm. It localises to the cytoskeleton. It is found in the microtubule organizing center. Its subcellular location is the centrosome. It catalyses the reaction L-lysyl-[protein] + 3 S-adenosyl-L-methionine = N(6),N(6),N(6)-trimethyl-L-lysyl-[protein] + 3 S-adenosyl-L-homocysteine + 3 H(+). It carries out the reaction L-lysyl-[protein] + S-adenosyl-L-methionine = N(6)-methyl-L-lysyl-[protein] + S-adenosyl-L-homocysteine + H(+). The catalysed reaction is N(6)-methyl-L-lysyl-[protein] + S-adenosyl-L-methionine = N(6),N(6)-dimethyl-L-lysyl-[protein] + S-adenosyl-L-homocysteine + H(+). The enzyme catalyses N(6),N(6)-dimethyl-L-lysyl-[protein] + S-adenosyl-L-methionine = N(6),N(6),N(6)-trimethyl-L-lysyl-[protein] + S-adenosyl-L-homocysteine + H(+). In terms of biological role, protein-lysine methyltransferase that selectively mono-, di- and trimethylates 'Lys-165' of the translation elongation factors EEF1A1 and EEF1A2 in an aminoacyl-tRNA and GTP-dependent manner. EEF1A1 methylation by EEF1AKMT3 is dynamic as well as inducible by stress conditions, such as ER-stress, and plays a regulatory role on mRNA translation. The polypeptide is EEF1A lysine methyltransferase 3 (Xenopus tropicalis (Western clawed frog)).